An 819-amino-acid chain; its full sequence is MPVAYTFPVLPSSCLLCGISNRSTSFVVDRPELQISGLLVVRSESGEFFGSGLSLRRFQREGRRRLNAAGGGIHVVDNAPSRTSSLAASTSTIELPVTCYQLIGVSEQAEKDEVVKSVINLKKTDAEEGYTMEAAAARQDLLMDVRDKLLFESEYAGNLKEKIAPKSPLRIPWAWLPGALCLLQEVGQEKLVLDIGRAALRNLDSKPYIHDIFLSMALAECAIAKAAFEVNKVSQGFEALARAQSFLKSKVTLGKLALLTQIEESLEELAPPCTLDLLGLPRTPENAERRRGAIAALRELLRQGLSVEASCQIQDWPCFLSQAISRLLATEIVDLLPWDDLAITRKNKKSLESHNQRVVIDFNCFYMVLLGHIAVGFSGKQNETINKAKTICECLIASEGVDLKFEEAFCSFLLKQGSEAEALEKLKQLESNSDSAVRNSILGKESRSTSATPSLEAWLMESVLANFPDTRGCSPSLANFFRAEKKYPENKKMGSPSIMNHKTNQRPLSTTQFVNSSQHLYTAVEQLTPTDLQSPVVSAKNNDETSASMPSVQLKRNLGVHKNKIWDEWLSQSSLIGRVSVVALLGCTVFFSLKLSGIRSGRLQSMPISVSARPHSESDSFLWKTESGNFRKNLDSVNRNGIVGNIKVLIDMLKMHCGEHPDALYLKSSGQSATSLSHSASELHKRPMDTEEAEELVRQWENVKAEALGPTHQVYSLSEVLDESMLVQWQTLAQTAEAKSCYWRFVLLHLEVLQAHIFEDGIAGEAAEIEALLEEAAELVDESQPKNAKYYSTYKIRYILKKQEDGLWKFCQSDIQIQK.

A chloroplast-targeting transit peptide spans 1–76 (MPVAYTFPVL…NAAGGGIHVV (76 aa)). Residues 77-572 (DNAPSRTSSL…NKIWDEWLSQ (496 aa)) lie on the Stromal side of the membrane. Residues 419 to 439 (EAEALEKLKQLESNSDSAVRN) adopt a coiled-coil conformation. The helical transmembrane segment at 573-593 (SSLIGRVSVVALLGCTVFFSL) threads the bilayer. At 594–819 (KLSGIRSGRL…FCQSDIQIQK (226 aa)) the chain is on the chloroplast intermembrane side. Residues 762–782 (IAGEAAEIEALLEEAAELVDE) adopt a coiled-coil conformation.

In terms of assembly, self-interacts. Interacts (via N-terminus) with ARC3 (via MORN domains). Binds (via N-terminus) to FTSZ2 proteins, FTSZ2-1 and FTSZ2-2. Recruited ARC3 to the middle of the plastid where subsequent complex made of CDP1/PARC6, ARC3 and FtsZ proteins can form; this complex enhances the dynamics of Z rings during chloroplast division. Interacts (via C-terminus) with PDV1 (via C-terminus). Interacts with MIND1. Exclusively expressed in young green tissues such as young cotyledons, shoot apex, emerging leaves and budding inflorescence.

It localises to the plastid. The protein resides in the chloroplast inner membrane. Component of the plastid division machinery required for PDV1 localization to constriction sites. Involved in chloroplast division site placement. Required for the proper formation of FtsZ rings at the division site in nongreen plastids (e.g. etioplasts). Inhibits FtsZ assembly, functioning as an antagonistic regulator of FtsZ dynamics against ARC6, by recruiting ARC3 to the middle of the plastid to facilitate its interaction with FtsZ proteins. Required during stromule biogenesis in the leaf epidermis, especially in non-mesophyll cells plastids. This chain is Plastid division protein CDP1, chloroplastic, found in Arabidopsis thaliana (Mouse-ear cress).